Reading from the N-terminus, the 423-residue chain is Maintenance of mitochondrial morphology protein 1 (423 aa).

Topologically, residues 1–20 (MTIPAPIPDKAESSLSFTQG) are lumenal. The helical transmembrane segment at 21–41 (LLLGQLSIVILIGAFIKFFIF) threads the bilayer. Residues 42 to 423 (GDPPSPDVTA…PGSMPGLSMT (382 aa)) are Cytoplasmic-facing. The SMP-LTD domain occupies 115–327 (QPESLDWFNV…EPRFQQIELP (213 aa)). 2 disordered regions span residues 332–372 (RKKN…KEVE) and 387–423 (SLDV…LSMT). Residues 355-372 (RSRDVERDLREEARKEVE) are compositionally biased toward basic and acidic residues.

It belongs to the MMM1 family. As to quaternary structure, homodimer. Component of the ER-mitochondria encounter structure (ERMES) or MDM complex, composed of MMM1, MDM10, MDM12 and MDM34. An MMM1 homodimer associates with one molecule of MDM12 on each side in a pairwise head-to-tail manner, and the SMP-LTD domains of MMM1 and MDM12 generate a continuous hydrophobic tunnel for phospholipid trafficking.

The protein resides in the endoplasmic reticulum membrane. Its function is as follows. Component of the ERMES/MDM complex, which serves as a molecular tether to connect the endoplasmic reticulum (ER) and mitochondria. Components of this complex are involved in the control of mitochondrial shape and protein biogenesis, and function in nonvesicular lipid trafficking between the ER and mitochondria. The MDM12-MMM1 subcomplex functions in the major beta-barrel assembly pathway that is responsible for biogenesis of all outer membrane beta-barrel proteins, and acts in a late step after the SAM complex. The MDM10-MDM12-MMM1 subcomplex further acts in the TOM40-specific pathway after the action of the MDM12-MMM1 complex. Essential for establishing and maintaining the structure of mitochondria and maintenance of mtDNA nucleoids. The protein is Maintenance of mitochondrial morphology protein 1 of Botryotinia fuckeliana (strain B05.10) (Noble rot fungus).